Here is a 180-residue protein sequence, read N- to C-terminus: Inner membrane-spanning protein YciB (180 aa).

Transmembrane regions (helical) follow at residues 4–24 (LLSEIGPVIAFFAGFFYGGGI), 25–45 (QSATLYMLITSIICITLCYII), 49–69 (VSKLSIISSTVLFVSGIITLI), 76–96 (IKIKPTILYVIFGIIFLMSGI), 118–138 (IILSYRTAAFFFFMAVVNEVV), and 150–170 (FKVFGVIPITFIFILLQLPLL).

It belongs to the YciB family.

The protein resides in the cell inner membrane. Its function is as follows. Plays a role in cell envelope biogenesis, maintenance of cell envelope integrity and membrane homeostasis. The polypeptide is Inner membrane-spanning protein YciB (Rickettsia typhi (strain ATCC VR-144 / Wilmington)).